Reading from the N-terminus, the 375-residue chain is MQRLQICVYIYLFVLIVAGPVDLSENSEQKENVEKEGLCNACTWRQNTKSSRIEAIKIQILSKLRLETAPNISRDAVRQLLPRAPPLRELIDQYDVQRDDSSDGSLEDDDYHATTETVIAMPAETDLLMQVEGKPKCCFFKFSSKIQYNKVVKAQLWIYLRPVKTPTTVFVQILRLIKPMKDGTRYTGIRSPKLDMNPGTGIWQSIDVKTVLQNWLKQPESNLGIEIKALDENGHDLAVTFPGPGEDGLNPFLEVKVTDTPKRSRRDFGLDCDEHSTESRCRRYPLTVDFEAFGWDWIIAPKRYKANYCSGECEFVFLQKYPHTHLVHQANPRGSAGPCCTPTKMSPINMLYFNGKEQIIYGKIPAMVVDRCGCS.

The signal sequence occupies residues 1–18 (MQRLQICVYIYLFVLIVA). A propeptide spanning residues 19 to 266 (GPVDLSENSE…VTDTPKRSRR (248 aa)) is cleaved from the precursor. Residue Asn71 is glycosylated (N-linked (GlcNAc...) asparagine). 3 cysteine pairs are disulfide-bonded: Cys281-Cys340, Cys309-Cys372, and Cys313-Cys374.

It belongs to the TGF-beta family. As to quaternary structure, homodimer; disulfide-linked. Interacts with WFIKKN2, leading to inhibit its activity. Interacts with FSTL3. Post-translationally, synthesized as large precursor molecule that undergoes proteolytic cleavage to generate an N-terminal propeptide and a disulfide linked C-terminal dimer, which is the biologically active molecule. The circulating form consists of a latent complex of the C-terminal dimer and other proteins, including its propeptide, which maintain the C-terminal dimer in a latent, inactive state. Ligand activation requires additional cleavage of the prodomain by a tolloid-like metalloproteinase.

The protein localises to the secreted. Functionally, acts specifically as a negative regulator of skeletal muscle growth. This is Growth/differentiation factor 8 (MSTN) from Vulpes vulpes (Red fox).